The primary structure comprises 314 residues: Very long chain fatty acid elongase 4 (314 aa).

The N-linked (GlcNAc...) asparagine glycan is linked to Asn20. 7 helical membrane passes run 42 to 62 (LMQS…FVWL), 78 to 98 (VLII…RELF), 127 to 147 (ALWW…FFIL), 165 to 185 (MFTL…FFGA), 188 to 208 (NSFI…GPWI), 217 to 237 (YLTM…ALSL), and 247 to 267 (MHWA…NFYI). The tract at residues 275 to 314 (KPKAGKTAMNGISANGVSKSEKQLMIENGKKQKNGKAKGD) is disordered. The segment covering 293 to 304 (KSEKQLMIENGK) has biased composition (basic and acidic residues). The segment covering 305-314 (KQKNGKAKGD) has biased composition (basic residues). The short motif at 310-314 (KAKGD) is the Di-lysine motif element.

The protein belongs to the ELO family. ELOVL4 subfamily. As to quaternary structure, oligomer. N-glycosylated. In terms of tissue distribution, expressed in the retina and at much lower level in the brain. Ubiquitous, highest expression in thymus, followed by testis, small intestine, ovary, and prostate. Little or no expression in heart, lung, liver, or leukocates.

The protein localises to the endoplasmic reticulum membrane. The catalysed reaction is a very-long-chain acyl-CoA + malonyl-CoA + H(+) = a very-long-chain 3-oxoacyl-CoA + CO2 + CoA. It catalyses the reaction tetracosanoyl-CoA + malonyl-CoA + H(+) = 3-oxohexacosanoyl-CoA + CO2 + CoA. It carries out the reaction hexacosanoyl-CoA + malonyl-CoA + H(+) = 3-oxooctacosanyol-CoA + CO2 + CoA. The enzyme catalyses octacosanoyl-CoA + malonyl-CoA + H(+) = 3-oxo-triacontanoyl-CoA + CO2 + CoA. The catalysed reaction is triacontanoyl-CoA + malonyl-CoA + H(+) = 3-oxo-dotriacontanoyl-CoA + CO2 + CoA. It catalyses the reaction (19Z,22Z,25Z,28Z,31Z)-tetratriacontapentaenoyl-CoA + malonyl-CoA + H(+) = 3-oxo-(21Z,24Z,27Z,30Z,33Z)-hexatriacontapentaenoyl-CoA + CO2 + CoA. It carries out the reaction (4Z,7Z,10Z,13Z,16Z,19Z)-docosahexaenoyl-CoA + malonyl-CoA + H(+) = 3-oxo-(6Z,9Z,12Z,15Z,18Z,21Z)-tetracosahexaenoyl-CoA + CO2 + CoA. The enzyme catalyses (7Z,10Z,13Z,16Z)-docosatetraenoyl-CoA + malonyl-CoA + H(+) = (9Z,12Z,15Z,18Z)-3-oxotetracosatetraenoyl-CoA + CO2 + CoA. The catalysed reaction is (11Z,14Z,17Z,20Z,23Z)-hexacosapentaenoyl-CoA + malonyl-CoA + H(+) = 3-oxo-(13Z,16Z,19Z,22Z,25Z)-octacosapentaenoyl-CoA + CO2 + CoA. It catalyses the reaction (13Z,16Z,19Z,22Z,25Z)-octacosapentaenoyl-CoA + malonyl-CoA + H(+) = 3-oxo-(15Z,18Z,21Z,24Z,27Z)-triacontapentaenoyl-CoA + CO2 + CoA. It carries out the reaction (15Z,18Z,21Z,24Z,27Z)-triacontapentaenoyl-CoA + malonyl-CoA + H(+) = 3-oxo-(17Z,20Z,23Z,26Z,29Z)-dotriacontapentaenoyl-CoA + CO2 + CoA. The enzyme catalyses (17Z,20Z,23Z,26Z,29Z)-dotriacontapentaenoyl-CoA + malonyl-CoA + H(+) = 3-oxo-(19Z,22Z,25Z,28Z,31Z)-tetratriacontapentaenoyl-CoA + CO2 + CoA. The catalysed reaction is (21Z,24Z,27Z,30Z,33Z)-hexatriacontapentaenoyl-CoA + malonyl-CoA + H(+) = 3-oxo-(23Z,26Z,29Z,32Z,35Z)-octatriacontapentaenoyl-CoA + CO2 + CoA. It catalyses the reaction (11Z,14Z,17Z,20Z)-hexacosatetraenoyl-CoA + malonyl-CoA + H(+) = (13Z,16Z,19Z,22Z)-3-oxooctacosatetraenoyl-CoA + CO2 + CoA. It carries out the reaction (13Z,16Z,19Z,22Z)-octacosatetraenoyl-CoA + malonyl-CoA + H(+) = 3-oxo-(15Z,18Z,21Z,24Z)-triacontatetraenoyl-CoA + CO2 + CoA. The enzyme catalyses (15Z,18Z,21Z,24Z)-triacontatetraenoyl-CoA + malonyl-CoA + H(+) = 3-oxo-(17Z,20Z,23Z,26Z)-dotriacontatetraenoyl-CoA + CO2 + CoA. The catalysed reaction is (17Z,20Z,23Z,26Z)-dotriacontatetraenoyl-CoA + malonyl-CoA + H(+) = 3-oxo-(19Z,22Z,25Z,28Z)-tetratriacontatetraenoyl-CoA + CO2 + CoA. It catalyses the reaction (19Z,22Z,25Z,28Z)-tetratriacontatetraenoyl-CoA + malonyl-CoA + H(+) = 3-oxo-(21Z,24Z,27Z,30Z)-hexatriacontatetraenoyl-CoA + CO2 + CoA. It carries out the reaction (21Z,24Z,27Z,30Z)-hexatriacontatetraenoyl-CoA + malonyl-CoA + H(+) = 3-oxo-(23Z,26Z,29Z,32Z)-octatriacontatetraenoyl-CoA + CO2 + CoA. The enzyme catalyses (6Z,9Z,12Z,15Z,18Z,21Z)-tetracosahexaenoyl-CoA + malonyl-CoA + H(+) = 3-oxo-(8Z,11Z,14Z,17Z,20Z,23Z)-hexacosahexaenoyl-CoA + CO2 + CoA. The catalysed reaction is (8Z,11Z,14Z,17Z,20Z,23Z)-hexacosahexaenoyl-CoA + malonyl-CoA + H(+) = 3-oxo-(10Z,13Z,16Z,19Z,22Z,25Z)-octacosahexaenoyl-CoA + CO2 + CoA. It catalyses the reaction (10Z,13Z,16Z,19Z,22Z,25Z)-octacosahexaenoyl-CoA + malonyl-CoA + H(+) = 3-oxo-(12Z,15Z,18Z,21Z,24Z,27Z)-triacontahexaenoyl-CoA + CO2 + CoA. It carries out the reaction (12Z,15Z,18Z,21Z,24Z,27Z)-triacontahexaenoyl-CoA + malonyl-CoA + H(+) = 3-oxo-(14Z,17Z,20Z,23Z,26Z,29Z)-dotriacontahexaenoyl-CoA + CO2 + CoA. The enzyme catalyses (14Z,17Z,20Z,23Z,26Z,29Z)-dotriacontahexaenoyl-CoA + malonyl-CoA + H(+) = 3-oxo-(16Z,19Z,22Z,25Z,28Z,31Z)-tetratriacontahexaenoyl-CoA + CO2 + CoA. The catalysed reaction is (16Z,19Z,22Z,25Z,28Z,31Z)-tetratriacontahexaenoyl-CoA + malonyl-CoA + H(+) = 3-oxo-(18Z,21Z,24Z,27Z,30Z,33Z)-hexatriacontahexaenoyl-CoA + CO2 + CoA. It catalyses the reaction (9Z,12Z,15Z,18Z,21Z)-tetracosapentaenoyl-CoA + malonyl-CoA + H(+) = 3-oxo-(11Z,14Z,17Z,20Z,23Z)-hexacosapentaenoyl-CoA + CO2 + CoA. It functions in the pathway lipid metabolism; fatty acid biosynthesis. Catalyzes the first and rate-limiting reaction of the four reactions that constitute the long-chain fatty acids elongation cycle. This endoplasmic reticulum-bound enzymatic process allows the addition of 2 carbons to the chain of long- and very long-chain fatty acids (VLCFAs) per cycle. Condensing enzyme that catalyzes the synthesis of very long chain saturated (VLC-SFA) and polyunsaturated (PUFA) fatty acids that are involved in multiple biological processes as precursors of membrane lipids and lipid mediators. May play a critical role in early brain and skin development. This chain is Very long chain fatty acid elongase 4, found in Homo sapiens (Human).